The primary structure comprises 280 residues: Probable endonuclease 4 (280 aa).

Residues His-69, His-109, Glu-145, Asp-179, His-182, His-216, Asp-229, His-231, and Glu-261 each contribute to the Zn(2+) site.

This sequence belongs to the AP endonuclease 2 family. Zn(2+) serves as cofactor.

The enzyme catalyses Endonucleolytic cleavage to 5'-phosphooligonucleotide end-products.. Its function is as follows. Endonuclease IV plays a role in DNA repair. It cleaves phosphodiester bonds at apurinic or apyrimidinic (AP) sites, generating a 3'-hydroxyl group and a 5'-terminal sugar phosphate. The polypeptide is Probable endonuclease 4 (Actinobacillus pleuropneumoniae serotype 5b (strain L20)).